The following is a 1046-amino-acid chain: Suppressor of Mek1 (1046 aa).

Residues 1–101 (MEPLRKRVKV…QDIWENILQY (101 aa)) form the WH1 domain. The tract at residues 626–1046 (FESPETSCNN…SSPTPSELHV (421 aa)) is disordered. The span at 665 to 689 (IDEEEEEAYFNRDDDSEDSDDEDEL) shows a compositional bias: acidic residues. The span at 695–713 (NNNNNNNNNNKQICTNNEN) shows a compositional bias: low complexity. The segment covering 714–727 (NMEKNDDNIEKDNE) has biased composition (basic and acidic residues). The span at 743–752 (YEDEDDEDDE) shows a compositional bias: acidic residues. A compositionally biased stretch (basic and acidic residues) spans 753–783 (INKSVESDDIVEKHEIIDKNEKKDEIMKENN). The span at 784 to 803 (DSDNDDNDNNDNDNDNDNNS) shows a compositional bias: acidic residues. The segment covering 804–820 (DIENKNHLNNNGNNENN) has biased composition (low complexity). Basic and acidic residues-rich tracts occupy residues 826–855 (VQDK…KENL) and 862–876 (EKVK…KKEN). Positions 889 to 905 (SNNSNNNNNNNNNNSNN) are enriched in low complexity. Residues 909–935 (GDNRKTTPKRKLDYEKNESVVSKKIDK) show a composition bias toward basic and acidic residues. Over residues 958–995 (NNNNSNNNNNNNNNNNNNNNNNNNNNNNNNNNNNNNQN) the composition is skewed to low complexity. Residues 996–1011 (DENELSSASEEEEEQL) show a composition bias toward acidic residues. The Nuclear localization signal motif lies at 1003-1022 (ASEEEEEQLENGKHIKKFKR). A compositionally biased stretch (low complexity) spans 1028–1038 (NNSSNNSNNSS).

It belongs to the SMEK family. As to quaternary structure, interacts with ppp4c.

It is found in the cytoplasm. Its subcellular location is the cell cortex. The protein localises to the nucleus. Functionally, suppresses MEK1 null cell polarity, chemotaxis, and gene expression defects. Required for proper cytokinesis during vegetative growth, timely exit from the mound stage during development, and myosin II assembly. May be a regulatory subunit of serine/threonine-protein phosphatase 4 (PP4) and may control localization of PP4 to the nucleus. Involved in the regulation of some ppp4c functions, such as developmental progression, chemotaxis, expression of stress response genes and cell movement. The polypeptide is Suppressor of Mek1 (smkA) (Dictyostelium discoideum (Social amoeba)).